The primary structure comprises 364 residues: Peptide chain release factor 1 (364 aa).

An N5-methylglutamine modification is found at Q238. A compositionally biased stretch (basic and acidic residues) spans 286–297 (DEKRQAEEDSTR). A disordered region spans residues 286 to 315 (DEKRQAEEDSTRRNLVGSGDRSERIRTYNY).

It belongs to the prokaryotic/mitochondrial release factor family. Methylated by PrmC. Methylation increases the termination efficiency of RF1.

The protein resides in the cytoplasm. Peptide chain release factor 1 directs the termination of translation in response to the peptide chain termination codons UAG and UAA. The chain is Peptide chain release factor 1 from Idiomarina loihiensis (strain ATCC BAA-735 / DSM 15497 / L2-TR).